The sequence spans 184 residues: GTP-dependent dephospho-CoA kinase (184 aa).

GTP-binding residues include D33, V34, D52, K54, and E103.

The protein belongs to the GTP-dependent DPCK family.

It carries out the reaction 3'-dephospho-CoA + GTP = GDP + CoA + H(+). It functions in the pathway cofactor biosynthesis; coenzyme A biosynthesis. In terms of biological role, catalyzes the GTP-dependent phosphorylation of the 3'-hydroxyl group of dephosphocoenzyme A to form coenzyme A (CoA). This chain is GTP-dependent dephospho-CoA kinase, found in Ignicoccus hospitalis (strain KIN4/I / DSM 18386 / JCM 14125).